Reading from the N-terminus, the 213-residue chain is Homeobox protein koza (213 aa).

The tract at residues 24–72 (ILSHMGPGSKEKSLGFPKTDQDQDSSLRDTEEKYASEKLQSSSQPAEIH) is disordered. Positions 32–59 (SKEKSLGFPKTDQDQDSSLRDTEEKYAS) are enriched in basic and acidic residues. The segment at residues 102 to 161 (QKRSRAAFSHSQVIELERKFSSQKYLSAPERAQLAKSLKLTETQVKIWFQNRRYKTKRKQ) is a DNA-binding region (homeobox).

This sequence belongs to the NK-3 homeobox family. As to expression, expressed in the muscle layer of embryonic somites. In tailbud embryos, expressed throughout the entire myotome but at the mid-tailbud stage (stage 32), expression becomes restricted to the outer periphery of the somite so that by the tadpole stage only the outer, type I cells show expression. Also expressed in the dorsal cement gland and in the myocardial layer of the developing heart. In all tissues, expression begins after terminal differentiation.

It localises to the nucleus. Its function is as follows. May regulate cell proliferation in a tissue-specific manner. The sequence is that of Homeobox protein koza from Xenopus laevis (African clawed frog).